The chain runs to 204 residues: Recombination protein RecR (204 aa).

The C4-type zinc finger occupies 58 to 75; that stretch reads CSICQNVTDRGDDPCSIC. The Toprim domain maps to 83-181; that stretch reads SKICVVESPP…EVTKIARGIP (99 aa).

It belongs to the RecR family.

In terms of biological role, may play a role in DNA repair. It seems to be involved in an RecBC-independent recombinational process of DNA repair. It may act with RecF and RecO. The protein is Recombination protein RecR of Chlorobium phaeobacteroides (strain BS1).